We begin with the raw amino-acid sequence, 127 residues long: Large ribosomal subunit protein bL20 (127 aa).

It belongs to the bacterial ribosomal protein bL20 family.

In terms of biological role, binds directly to 23S ribosomal RNA and is necessary for the in vitro assembly process of the 50S ribosomal subunit. It is not involved in the protein synthesizing functions of that subunit. The chain is Large ribosomal subunit protein bL20 from Corynebacterium aurimucosum (strain ATCC 700975 / DSM 44827 / CIP 107346 / CN-1) (Corynebacterium nigricans).